Here is a 914-residue protein sequence, read N- to C-terminus: UPF0182 protein Syncc9605_1323 (914 aa).

9 consecutive transmembrane segments (helical) span residues 4 to 24, 37 to 57, 81 to 101, 123 to 143, 152 to 172, 195 to 215, 240 to 260, 285 to 305, and 312 to 332; these read LLLL…WLWF, WLLQ…ARAW, IALL…LDLL, RIGS…MTWL, IVAA…SLAL, FAGL…TLVF, MRLI…LVWL, LPLR…LLLP, and QFLA…TPLT.

It belongs to the UPF0182 family.

Its subcellular location is the cell membrane. This is UPF0182 protein Syncc9605_1323 from Synechococcus sp. (strain CC9605).